Here is a 204-residue protein sequence, read N- to C-terminus: Guanylate kinase (204 aa).

The region spanning 3–181 (GTLIIITAPS…ALDDLVAVVR (179 aa)) is the Guanylate kinase-like domain. 10–17 (APSGAGKT) lines the ATP pocket.

The protein belongs to the guanylate kinase family.

The protein localises to the cytoplasm. It catalyses the reaction GMP + ATP = GDP + ADP. In terms of biological role, essential for recycling GMP and indirectly, cGMP. This Aromatoleum aromaticum (strain DSM 19018 / LMG 30748 / EbN1) (Azoarcus sp. (strain EbN1)) protein is Guanylate kinase.